Reading from the N-terminus, the 647-residue chain is MFQDNPLLAQLKQQLHSQTPRVEGVVKGTDKGFGFLEVDAQKSYFIPPPQMKKVMHGDRVRAAVQVDKEREIAEPEELLEPFLTRFVGRIQKKENDERLSIIPDHSLLKDAIGCRPARGLDRAFRQGDWVLAEMRRHPLKGDRSFFAEITAFITDGSDHFAPWWVTLTRHDLARSAPQWQAGTLLEEGLAREDLCALPFVTIDSASTEDMDDALHVRENADGSLCLTIAIADPTAYVSADSPLDAEARHRAFTTYLPGFNIPMLPRDLSDDLCSLREGQRRPVLACEVTLDADGSLRDDIRFFSGWIESKAKLVYDRVSDWLEGRGDWQPPSDDIAAQIRLLHRVANARTQWRQQHALVFRDRPDYRFVLDDHGDVTDIVAEPRRVANRIVEECMITANVCAALVLRERLGFGIYNVHTGFDPALVEQAVSLLNANDVAANAEALLTLDGFCTLRRHLDSLPSTFLDSRIRRFQTFAEISTEPGPHFGLGLEAYATWTSPIRKYGDMVNHRLLKALIAGAPATRPDPAMTLQLAERRRQNRMAERDVGDWLYARFLKDKVNAPTPFNAEIIDISRGGMRVRLLENGAVAFIPASFIHAVRDEMVCSQENGTLQVKGSVVYRQGDTVPVTLSEVRLDTRSLIARPFSA.

In terms of domain architecture, RNB spans 191 to 517 (REDLCALPFV…VNHRLLKALI (327 aa)). Residues 563–645 (PTPFNAEIID…DTRSLIARPF (83 aa)) form the S1 motif domain.

The protein belongs to the RNR ribonuclease family. RNase II subfamily.

The protein resides in the cytoplasm. It catalyses the reaction Exonucleolytic cleavage in the 3'- to 5'-direction to yield nucleoside 5'-phosphates.. Involved in mRNA degradation. Hydrolyzes single-stranded polyribonucleotides processively in the 3' to 5' direction. The polypeptide is Exoribonuclease 2 (Edwardsiella piscicida).